Here is a 435-residue protein sequence, read N- to C-terminus: Legumain (435 aa).

A signal peptide spans 1 to 17 (MTWRVAVLLSLVLGAGA). The N-linked (GlcNAc...) asparagine glycan is linked to Asn-93. His-150 is a catalytic residue. Residue Asn-169 is glycosylated (N-linked (GlcNAc...) asparagine). Catalysis depends on Cys-191, which acts as the Nucleophile. N-linked (GlcNAc...) asparagine glycans are attached at residues Asn-265 and Asn-274. The propeptide occupies 326 to 435 (DVKESQNLIG…AMDKVCLSHY (110 aa)). Disulfide bonds link Cys-380–Cys-414 and Cys-392–Cys-431.

Belongs to the peptidase C13 family. Homodimer before autocatalytic removal of the propeptide. Monomer after autocatalytic processing. May interact with integrins. In terms of processing, glycosylated. Post-translationally, activated by autocatalytic processing at pH 4. In terms of tissue distribution, detected in kidney proximal tubules (at protein level). Ubiquitous. Particularly abundant in kidney and placenta.

The protein resides in the lysosome. The catalysed reaction is Hydrolysis of proteins and small molecule substrates at -Asn-|-Xaa- bonds.. Inhibited by cystatin-C. In terms of biological role, has a strict specificity for hydrolysis of asparaginyl bonds. Can also cleave aspartyl bonds slowly, especially under acidic conditions. Involved in the processing of proteins for MHC class II antigen presentation in the lysosomal/endosomal system. Also involved in MHC class I antigen presentation in cross-presenting dendritic cells by mediating cleavage and maturation of Perforin-2 (MPEG1), thereby promoting antigen translocation in the cytosol. Required for normal lysosomal protein degradation in renal proximal tubules. Required for normal degradation of internalized EGFR. Plays a role in the regulation of cell proliferation via its role in EGFR degradation. The polypeptide is Legumain (Lgmn) (Mus musculus (Mouse)).